We begin with the raw amino-acid sequence, 327 residues long: 2-oxoisovalerate dehydrogenase subunit beta (327 aa).

Thiamine diphosphate is bound by residues Glu-29, 58–60 (LAE), Gln-82, and 86–89 (FIMP). Substrate contacts are provided by residues 83–86 (FADF) and His-129. Catalysis depends on His-129, which acts as the Proton acceptor.

As to quaternary structure, heterotetramer of two alpha and two beta chains. Directly associated with ODBA in the E1 complex. Thiamine diphosphate serves as cofactor.

The catalysed reaction is N(6)-[(R)-lipoyl]-L-lysyl-[protein] + 3-methyl-2-oxobutanoate + H(+) = N(6)-[(R)-S(8)-2-methylpropanoyldihydrolipoyl]-L-lysyl-[protein] + CO2. The branched-chain alpha-keto dehydrogenase complex catalyzes the overall conversion of alpha-keto acids to acyl-CoA and CO(2). It contains multiple copies of three enzymatic components: branched-chain alpha-keto acid decarboxylase (E1), lipoamide acyltransferase (E2) and lipoamide dehydrogenase (E3). The protein is 2-oxoisovalerate dehydrogenase subunit beta (bfmBAB) of Bacillus subtilis (strain 168).